Consider the following 525-residue polypeptide: NAD(P)H-quinone oxidoreductase chain 4-1 (525 aa).

14 helical membrane passes run 4-24, 37-57, 89-109, 111-131, 134-154, 167-187, 210-230, 241-261, 273-293, 309-329, 330-350, 385-405, 416-436, and 462-482; these read FPWL…IPII, LAVG…GFDL, LIIL…PVTL, PKLF…VFAV, ILLF…ILSI, FILY…TLAF, LLLY…FPLH, TAPA…YALL, AVFA…AAFT, ISHM…GMSG, AMLQ…MVGA, LALP…GFAT, IVVV…LSML, and VFII…PKLI.

This sequence belongs to the complex I subunit 4 family.

It is found in the cellular thylakoid membrane. The enzyme catalyses a plastoquinone + NADH + (n+1) H(+)(in) = a plastoquinol + NAD(+) + n H(+)(out). It carries out the reaction a plastoquinone + NADPH + (n+1) H(+)(in) = a plastoquinol + NADP(+) + n H(+)(out). Functionally, NDH-1 shuttles electrons from NAD(P)H, via FMN and iron-sulfur (Fe-S) centers, to quinones in the respiratory chain. The immediate electron acceptor for the enzyme in this species is believed to be plastoquinone. Couples the redox reaction to proton translocation (for every two electrons transferred, four hydrogen ions are translocated across the cytoplasmic membrane), and thus conserves the redox energy in a proton gradient. The chain is NAD(P)H-quinone oxidoreductase chain 4-1 (ndhD1) from Synechocystis sp. (strain ATCC 27184 / PCC 6803 / Kazusa).